The sequence spans 511 residues: NAD(P)H-quinone oxidoreductase subunit 2 B, chloroplastic (511 aa).

A run of 13 helical transmembrane segments spans residues 24–44 (LLLF…GLIL), 57–77 (IPWL…ALLF), 99–119 (IFQF…VEYI), 124–144 (MAIT…MFLC), 149–169 (LITI…LSGY), 183–203 (YLLM…WLYG), 227–247 (PGIS…LSPA), 295–315 (WHLL…LIAI), 323–343 (MLAY…IVGD), 354–374 (YMLF…LFGL), 395–415 (ALSL…AGFF), 418–438 (LHLF…IGLL), and 484–504 (MIVC…IIAI).

Belongs to the complex I subunit 2 family. In terms of assembly, NDH is composed of at least 16 different subunits, 5 of which are encoded in the nucleus.

It localises to the plastid. It is found in the chloroplast thylakoid membrane. It catalyses the reaction a plastoquinone + NADH + (n+1) H(+)(in) = a plastoquinol + NAD(+) + n H(+)(out). The catalysed reaction is a plastoquinone + NADPH + (n+1) H(+)(in) = a plastoquinol + NADP(+) + n H(+)(out). In terms of biological role, NDH shuttles electrons from NAD(P)H:plastoquinone, via FMN and iron-sulfur (Fe-S) centers, to quinones in the photosynthetic chain and possibly in a chloroplast respiratory chain. The immediate electron acceptor for the enzyme in this species is believed to be plastoquinone. Couples the redox reaction to proton translocation, and thus conserves the redox energy in a proton gradient. The chain is NAD(P)H-quinone oxidoreductase subunit 2 B, chloroplastic from Nandina domestica (Heavenly bamboo).